The primary structure comprises 361 residues: Septin-12 (361 aa).

A Septin-type G domain is found at 45 to 316 (MGFEFNIMVV…ENYRIIRLKE (272 aa)). An interaction with SEPTIN7 region spans residues 45–318 (MGFEFNIMVV…YRIIRLKESH (274 aa)). The G1 motif stretch occupies residues 55–62 (GQSGLGKS). GTP is bound by residues 55–62 (GQSGLGKS), Thr-88, Gly-114, 194–202 (RADSLTIEE), Gly-250, and Arg-265. The interval 111-114 (DTPG) is G3 motif. The segment at 193-196 (ARAD) is G4 motif. The tract at residues 257 to 361 (VNGRCVLGRK…WAEDNSDEDF (105 aa)) is self-association (via N-terminus) to polymerize octameric septin 12-7-6-2/4-2/4-6-7-12 filaments. The disordered stretch occupies residues 333-361 (PPPAPTGTRASPGPAKMCRWAEDNSDEDF). The segment covering 338 to 347 (TGTRASPGPA) has biased composition (low complexity).

The protein belongs to the TRAFAC class TrmE-Era-EngA-EngB-Septin-like GTPase superfamily. Septin GTPase family. Septins polymerize into heterooligomeric protein complexes that form filaments, and can associate with cellular membranes, actin filaments and microtubules. GTPase activity is required for filament formation. Interacts with SEPTIN6 and SEPTIN11. Component of a octameric complex consisting of SEPTIN12, SEPTIN7, SEPTIN6 and SEPTIN2 or SEPTIN4 in the order 12-7-6-2-2-6-7-12 or 12-7-6-4-4-6-7-12 and located in the sperm annulus; the octamer polymerizes into filaments via the SEPTIN12 N- and C-termini; the SEPTIN12:SEPTIN7 association is mediated by the GTP-binding domains. Interacts with SPAG4 and LMNB1. Associates with alpha- and beta-tubulins.

The protein localises to the cytoplasm. The protein resides in the cytoskeleton. It localises to the spindle. Its subcellular location is the cell projection. It is found in the cilium. The protein localises to the flagellum. Its function is as follows. Filament-forming cytoskeletal GTPase. May play a role in cytokinesis (Potential). Involved in spermatogenesis. Involved in the morphogenesis of sperm heads and the elongation of sperm tails probably implicating the association with alpha- and beta-tubulins. Forms a filamentous structure with SEPTIN7, SEPTIN6, SEPTIN2 and probably SEPTIN4 at the sperm annulus which is required for the structural integrity and motility of the sperm tail during postmeiotic differentiation. The polypeptide is Septin-12 (Bos taurus (Bovine)).